Reading from the N-terminus, the 264-residue chain is Elongation factor Ts (264 aa).

Residues threonine 76–valine 79 are involved in Mg(2+) ion dislocation from EF-Tu.

This sequence belongs to the EF-Ts family.

The protein localises to the cytoplasm. Associates with the EF-Tu.GDP complex and induces the exchange of GDP to GTP. It remains bound to the aminoacyl-tRNA.EF-Tu.GTP complex up to the GTP hydrolysis stage on the ribosome. The polypeptide is Elongation factor Ts (Deinococcus radiodurans (strain ATCC 13939 / DSM 20539 / JCM 16871 / CCUG 27074 / LMG 4051 / NBRC 15346 / NCIMB 9279 / VKM B-1422 / R1)).